The chain runs to 161 residues: Small ribosomal subunit protein uS19 (161 aa).

Over residues 1 to 19 (MARQKKYSGKGGARKKNKQ) the composition is skewed to basic residues. Positions 1–26 (MARQKKYSGKGGARKKNKQKQNVAPR) are disordered.

It belongs to the universal ribosomal protein uS19 family.

Protein S19 forms a complex with S13 that binds strongly to the 16S ribosomal RNA. The protein is Small ribosomal subunit protein uS19 of Methanococcus maripaludis (strain C5 / ATCC BAA-1333).